The sequence spans 415 residues: YDG domain-containing protein At5g47160 (415 aa).

The tract at residues 163–186 is disordered; that stretch reads KKLSNASRLRANAHRPTQHKDERR. The YDG domain occupies 262–407; sequence GSVPGIKVGD…NILFKFKLRR (146 aa).

The protein localises to the nucleus. The chain is YDG domain-containing protein At5g47160 from Arabidopsis thaliana (Mouse-ear cress).